A 618-amino-acid chain; its full sequence is MPPYRSRTTTHGRNMAGARSLWRATGVKNEDFGKPIIAVANSFTQFVPGHVHLKDMGQLVAEEIEKAGGIAKEFNTIAIDDGIAMGHGGMLYSLPSRELIADSVEYMVNAHCADALVCISNCDKITPGMLMASMRLNIPTVFVSGGPMEAGKAEVKGVKRALDLIDAMVIAADDHYSDGEVEVIEQTACATCGSCSGMFTANSMNCLTEALGLSFPGNGSMLATHSDREQLFRKAGHTIVDMARSYYEQDDAAVLPRSIATLEAFENAMSLDIAMGGSTNTVLHLLAVAQEGNVPFTMADIDRLSRHVPCLCKVAPAKNDVHMEDVHRAGGVMAILGQLDRAGLINTSLRTIHSPTLGAALDAWDISRDSCSEEAQLFYRAAPGGVPTQKAFSQSSRYEALDTDREKGVIRSKNHAFSTDGGLAVLFGNLAPEGSIVKTAGVDESILKFTGKAKVYESQEAAVAGILGNDVEAGEVVIVRYEGPKGGPGMQEMLYPTSYLKSKGLGKLCALITDGRFSGGSSGLSIGHVSPEAAEGGLIALVETGDTIVIDIPERIIHLDVDDAVIADRHARMEAKGAAAWKPQNRNRPISSALKAYAALTTNAARGAVRDVNQLERR.

Asp81 contacts Mg(2+). Cys122 lines the [2Fe-2S] cluster pocket. Mg(2+)-binding residues include Asp123 and Lys124. At Lys124 the chain carries N6-carboxylysine. Cys195 contacts [2Fe-2S] cluster. Residue Glu492 participates in Mg(2+) binding. Ser518 serves as the catalytic Proton acceptor.

Belongs to the IlvD/Edd family. In terms of assembly, homodimer. The cofactor is [2Fe-2S] cluster. Requires Mg(2+) as cofactor.

It catalyses the reaction (2R)-2,3-dihydroxy-3-methylbutanoate = 3-methyl-2-oxobutanoate + H2O. It carries out the reaction (2R,3R)-2,3-dihydroxy-3-methylpentanoate = (S)-3-methyl-2-oxopentanoate + H2O. The protein operates within amino-acid biosynthesis; L-isoleucine biosynthesis; L-isoleucine from 2-oxobutanoate: step 3/4. It functions in the pathway amino-acid biosynthesis; L-valine biosynthesis; L-valine from pyruvate: step 3/4. In terms of biological role, functions in the biosynthesis of branched-chain amino acids. Catalyzes the dehydration of (2R,3R)-2,3-dihydroxy-3-methylpentanoate (2,3-dihydroxy-3-methylvalerate) into 2-oxo-3-methylpentanoate (2-oxo-3-methylvalerate) and of (2R)-2,3-dihydroxy-3-methylbutanoate (2,3-dihydroxyisovalerate) into 2-oxo-3-methylbutanoate (2-oxoisovalerate), the penultimate precursor to L-isoleucine and L-valine, respectively. This is Dihydroxy-acid dehydratase from Zymomonas mobilis subsp. mobilis (strain ATCC 31821 / ZM4 / CP4).